Here is a 191-residue protein sequence, read N- to C-terminus: Fe/S biogenesis protein NfuA (191 aa).

[4Fe-4S] cluster-binding residues include Cys-149 and Cys-152.

This sequence belongs to the NfuA family. In terms of assembly, homodimer. The cofactor is [4Fe-4S] cluster.

In terms of biological role, involved in iron-sulfur cluster biogenesis. Binds a 4Fe-4S cluster, can transfer this cluster to apoproteins, and thereby intervenes in the maturation of Fe/S proteins. Could also act as a scaffold/chaperone for damaged Fe/S proteins. The protein is Fe/S biogenesis protein NfuA of Hamiltonella defensa subsp. Acyrthosiphon pisum (strain 5AT).